The primary structure comprises 459 residues: Sperm-tail PG-rich repeat-containing protein 2 (459 aa).

STPGR repeat units lie at residues valine 21 to phenylalanine 30, proline 63 to alanine 73, threonine 119 to glycine 148, glycine 157 to lysine 203, threonine 213 to serine 243, proline 257 to threonine 268, proline 351 to leucine 377, glycine 400 to leucine 410, and threonine 433 to glutamine 443.

This chain is Sperm-tail PG-rich repeat-containing protein 2 (STPG2), found in Homo sapiens (Human).